A 96-amino-acid polypeptide reads, in one-letter code: uncharacterized protein (96 aa).

The first 15 residues, 1–15, serve as a signal peptide directing secretion; sequence MRLFILLVALFVICA.

This is an uncharacterized protein from Caenorhabditis elegans.